The primary structure comprises 397 residues: Enoyl-[acyl-carrier-protein] reductase [NADH] (397 aa).

NAD(+) is bound by residues 48–53 (GASTGY), 74–75 (LE), 111–112 (DA), and 139–140 (LA). Residue Y225 participates in substrate binding. Residue Y235 is the Proton donor of the active site. Residues K244 and 273–275 (VVT) each bind NAD(+).

The protein belongs to the TER reductase family. In terms of assembly, monomer.

It carries out the reaction a 2,3-saturated acyl-[ACP] + NAD(+) = a (2E)-enoyl-[ACP] + NADH + H(+). It participates in lipid metabolism; fatty acid biosynthesis. Functionally, involved in the final reduction of the elongation cycle of fatty acid synthesis (FAS II). Catalyzes the reduction of a carbon-carbon double bond in an enoyl moiety that is covalently linked to an acyl carrier protein (ACP). The protein is Enoyl-[acyl-carrier-protein] reductase [NADH] of Tolumonas auensis (strain DSM 9187 / NBRC 110442 / TA 4).